A 236-amino-acid chain; its full sequence is Purine nucleoside phosphorylase DeoD-type (236 aa).

Residue H5 participates in a purine D-ribonucleoside binding. Phosphate is bound by residues G21, R25, R44, and 88–91 (RIGS). A purine D-ribonucleoside-binding positions include 180–182 (EME) and 204–205 (SD). D205 acts as the Proton donor in catalysis.

Belongs to the PNP/UDP phosphorylase family. Homohexamer; trimer of homodimers.

The catalysed reaction is a purine D-ribonucleoside + phosphate = a purine nucleobase + alpha-D-ribose 1-phosphate. The enzyme catalyses a purine 2'-deoxy-D-ribonucleoside + phosphate = a purine nucleobase + 2-deoxy-alpha-D-ribose 1-phosphate. Catalyzes the reversible phosphorolytic breakdown of the N-glycosidic bond in the beta-(deoxy)ribonucleoside molecules, with the formation of the corresponding free purine bases and pentose-1-phosphate. This chain is Purine nucleoside phosphorylase DeoD-type, found in Hahella chejuensis (strain KCTC 2396).